Here is a 296-residue protein sequence, read N- to C-terminus: NADH-cytochrome b5 reductase 1 (296 aa).

The chain crosses the membrane as a helical span at residues 11–31 (LSAVLVKFAPFAVAVIAILAA). The 106-residue stretch at 47 to 152 (SEFQNFVLKE…RGPKGAMVYT (106 aa)) folds into the FAD-binding FR-type domain. Residues 132–147 (TTLKIGDTLKVRGPKG) and 158–195 (HIGMIAGGTGITPMLQIIKAIIRNRPRNGGNDTTKIDL) contribute to the FAD site.

The protein belongs to the flavoprotein pyridine nucleotide cytochrome reductase family. In terms of assembly, monomer. Component of the 2-(3-amino-3-carboxypropyl)histidine synthase complex composed of dph1, dph2, dph3 and a NADH-dependent reductase, predominantly cbr1. The cofactor is FAD.

Its subcellular location is the mitochondrion outer membrane. The catalysed reaction is 2 Fe(III)-[cytochrome b5] + NADH = 2 Fe(II)-[cytochrome b5] + NAD(+) + H(+). It catalyses the reaction 2 Fe(3+)-[Dph3] + NADH = 2 Fe(2+)-[Dph3] + NAD(+) + H(+). Its pathway is protein modification; peptidyl-diphthamide biosynthesis. In terms of biological role, NADH-dependent reductase for dph3 and cytochrome b5. Required for the first step of diphthamide biosynthesis, a post-translational modification of histidine which occurs in elongation factor 2. Dph1 and dph2 transfer a 3-amino-3-carboxypropyl (ACP) group from S-adenosyl-L-methionine (SAM) to a histidine residue, the reaction is assisted by a reduction system comprising dph3 and a NADH-dependent reductase, predominantly cbr1. By reducing dph3, also involved in the formation of the tRNA wobble base modification mcm5s 2U (5-methoxycarbonylmethyl-2-thiouridine), mediated by the elongator complex. The cytochrome b5/NADH cytochrome b5 reductase electron transfer system supports the catalytic activity of several sterol biosynthetic enzymes. The polypeptide is NADH-cytochrome b5 reductase 1 (cbr1) (Aspergillus terreus (strain NIH 2624 / FGSC A1156)).